A 293-amino-acid polypeptide reads, in one-letter code: Glycine N-methyltransferase (293 aa).

Valine 2 is subject to N-acetylvaline. Residues serine 4 and tyrosine 6 each contribute to the (6S)-5-methyl-5,6,7,8-tetrahydrofolate site. A Phosphoserine modification is found at serine 10. S-adenosyl-L-methionine-binding residues include tyrosine 22, tryptophan 31, tyrosine 34, and arginine 41. At tyrosine 34 the chain carries Phosphotyrosine. At lysine 46 the chain carries N6-succinyllysine. Residues alanine 65, aspartate 86–serine 88, asparagine 117–tryptophan 118, leucine 137–serine 140, and arginine 176 each bind S-adenosyl-L-methionine. Lysine 191, lysine 196, and lysine 201 each carry N6-succinyllysine. Histidine 215 provides a ligand contact to (6S)-5-methyl-5,6,7,8-tetrahydrofolate. Tyrosine 221 is a binding site for S-adenosyl-L-methionine. Arginine 240 contributes to the (6S)-5-methyl-5,6,7,8-tetrahydrofolate binding site.

It belongs to the class I-like SAM-binding methyltransferase superfamily. Glycine N-methyltransferase family. In terms of assembly, homotetramer. In terms of tissue distribution, abundant in liver.

Its subcellular location is the cytoplasm. It catalyses the reaction glycine + S-adenosyl-L-methionine = sarcosine + S-adenosyl-L-homocysteine + H(+). Inhibited by 5-methyltetrahydrofolate monoglutamate and by 5-methyltetrahydrofolate pentaglutamate, inhibition is much more effective by the pentaglutamate form than by the monoglutamate form. Two molecules of 5-methyltetrahydrofolate are bound per tetramer. The binding sites are localized between subunits. Inhibitor binding may preclude movements of the polypeptide chain that are necessary for enzyme activity. In terms of biological role, catalyzes the methylation of glycine by using S-adenosylmethionine (AdoMet) to form N-methylglycine (sarcosine) with the concomitant production of S-adenosylhomocysteine (AdoHcy), a reaction regulated by the binding of 5-methyltetrahydrofolate. Possible crucial role in the regulation of tissue concentration of AdoMet and of metabolism of methionine. The protein is Glycine N-methyltransferase (Gnmt) of Rattus norvegicus (Rat).